The following is a 526-amino-acid chain: GMP synthase [glutamine-hydrolyzing] (526 aa).

Residues 9–208 enclose the Glutamine amidotransferase type-1 domain; sequence RILILDFGSQ…VKDICGCECL (200 aa). Catalysis depends on C86, which acts as the Nucleophile. Catalysis depends on residues H182 and E184. In terms of domain architecture, GMPS ATP-PPase spans 209-401; it reads WTPATIIDDA…LGLPYDMLYR (193 aa). 236 to 242 serves as a coordination point for ATP; sequence SGGVDSS.

In terms of assembly, homodimer.

The enzyme catalyses XMP + L-glutamine + ATP + H2O = GMP + L-glutamate + AMP + diphosphate + 2 H(+). It functions in the pathway purine metabolism; GMP biosynthesis; GMP from XMP (L-Gln route): step 1/1. In terms of biological role, catalyzes the synthesis of GMP from XMP. In Aeromonas salmonicida (strain A449), this protein is GMP synthase [glutamine-hydrolyzing].